The chain runs to 424 residues: Serine hydroxymethyltransferase 2 (424 aa).

(6S)-5,6,7,8-tetrahydrofolate-binding positions include leucine 125 and glycine 129–leucine 131. Lysine 234 bears the N6-(pyridoxal phosphate)lysine mark. Position 250 (glutamate 250) interacts with (6S)-5,6,7,8-tetrahydrofolate.

The protein belongs to the SHMT family. In terms of assembly, homodimer. Pyridoxal 5'-phosphate serves as cofactor.

It is found in the cytoplasm. The enzyme catalyses (6R)-5,10-methylene-5,6,7,8-tetrahydrofolate + glycine + H2O = (6S)-5,6,7,8-tetrahydrofolate + L-serine. Its pathway is one-carbon metabolism; tetrahydrofolate interconversion. It participates in amino-acid biosynthesis; glycine biosynthesis; glycine from L-serine: step 1/1. In terms of biological role, catalyzes the reversible interconversion of serine and glycine with tetrahydrofolate (THF) serving as the one-carbon carrier. This reaction serves as the major source of one-carbon groups required for the biosynthesis of purines, thymidylate, methionine, and other important biomolecules. Also exhibits THF-independent aldolase activity toward beta-hydroxyamino acids, producing glycine and aldehydes, via a retro-aldol mechanism. The sequence is that of Serine hydroxymethyltransferase 2 from Ralstonia nicotianae (strain ATCC BAA-1114 / GMI1000) (Ralstonia solanacearum).